The chain runs to 108 residues: Nucleoid-associated protein Bcen_6253 (108 aa).

A compositionally biased stretch (polar residues) spans 85–95 (ATSQEKMSGMT). Residues 85–108 (ATSQEKMSGMTSGLPLPPGFKLPF) form a disordered region. Positions 99 to 108 (PLPPGFKLPF) are enriched in pro residues.

It belongs to the YbaB/EbfC family. As to quaternary structure, homodimer.

The protein localises to the cytoplasm. The protein resides in the nucleoid. In terms of biological role, binds to DNA and alters its conformation. May be involved in regulation of gene expression, nucleoid organization and DNA protection. The chain is Nucleoid-associated protein Bcen_6253 from Burkholderia orbicola (strain AU 1054).